Here is a 229-residue protein sequence, read N- to C-terminus: MFKKMLLVDPKMRKEKQIKKHNMKRHPLSSAGVDDVSMLKSLTKSSINRDIVSKIIKESAGRELQGHEKLQIQSALRDIESAENQARVQQCNAKCISEVMEVGRMAAMATSATLVLVEQSKLSEKKLERSEKVAKRVGKIESLNEKLDLAGGIGTRMYEAVGELTDIFDPSAYSEEKSNGILSTSQERILNEIQAKVQSDVYMNLPSVPLNSTLSLGEAEKSITEKLYL.

Residues 66-94 (GHEKLQIQSALRDIESAENQARVQQCNAK) are a coiled coil.

This is an uncharacterized protein from Ostreid herpesvirus 1 (isolate France) (OsHV-1).